A 131-amino-acid polypeptide reads, in one-letter code: D-ribose pyranase (131 aa).

Catalysis depends on His-20, which acts as the Proton donor. Substrate-binding positions include Asp-28, His-98, and 120–122 (YAN).

This sequence belongs to the RbsD / FucU family. RbsD subfamily. In terms of assembly, homodecamer.

It is found in the cytoplasm. The enzyme catalyses beta-D-ribopyranose = beta-D-ribofuranose. Its pathway is carbohydrate metabolism; D-ribose degradation; D-ribose 5-phosphate from beta-D-ribopyranose: step 1/2. In terms of biological role, catalyzes the interconversion of beta-pyran and beta-furan forms of D-ribose. This Laribacter hongkongensis (strain HLHK9) protein is D-ribose pyranase.